A 253-amino-acid polypeptide reads, in one-letter code: 5'-nucleotidase SurE (253 aa).

A divalent metal cation-binding residues include Asp-8, Asp-9, Ser-39, and Asn-95.

Belongs to the SurE nucleotidase family. The cofactor is a divalent metal cation.

It localises to the cytoplasm. The enzyme catalyses a ribonucleoside 5'-phosphate + H2O = a ribonucleoside + phosphate. Functionally, nucleotidase that shows phosphatase activity on nucleoside 5'-monophosphates. In Chloroflexus aggregans (strain MD-66 / DSM 9485), this protein is 5'-nucleotidase SurE.